The following is a 307-amino-acid chain: tRNA dimethylallyltransferase (307 aa).

10–17 (GPTAVGKT) provides a ligand contact to ATP. 12-17 (TAVGKT) contacts substrate. The segment at 35 to 38 (DSMQ) is interaction with substrate tRNA.

It belongs to the IPP transferase family. Monomer. Mg(2+) serves as cofactor.

The enzyme catalyses adenosine(37) in tRNA + dimethylallyl diphosphate = N(6)-dimethylallyladenosine(37) in tRNA + diphosphate. Its function is as follows. Catalyzes the transfer of a dimethylallyl group onto the adenine at position 37 in tRNAs that read codons beginning with uridine, leading to the formation of N6-(dimethylallyl)adenosine (i(6)A). This chain is tRNA dimethylallyltransferase, found in Ligilactobacillus salivarius (strain UCC118) (Lactobacillus salivarius).